Consider the following 504-residue polypeptide: MGFLSAGGLWASLFRARISPIVETDEVLPLTLIDNIAAARNAILSEVIRFDQVLDVVKLRDGLTELIDKRGWRKLGGRLRLRPNGSLEIHVPREFTEERPAFRFTSQAFDIAIEEHALGSQLPKLSDGPSLQPGSTSVDKFNLIPDKPEKLDDYVYSDRPILALHVTSFTNSCIVTLTWSHVVFGARGIKELIAAWSKVLHGEQNVPLLLGTHQDVLAGIGTDGDKTAPFLLDPIKIKGLGLVRIIFGLLWEIWQHPTVETRALHLPKRFVSQLRQKCMEELGAFCREDPAPFISEGDVLEAWCSRFVAQARADEKPALVTNALDIKDRLTAPWSSRGEYLQNTGCCTWTPVQPETLLRSPLGELAYVIRRSIQELATDDQLRAQLRIFRSLGHTKMLPLFGNPNSRVISFSNWTKFNLFEVTNLGPAVISTSPSTRSDASTSPIGRPVYMHCEAAGDSRMLRNCFNVTGKDWDGSYWITAHLYPEDWTKLEEYMRQTQQHISD.

The signal sequence occupies residues 1-18 (MGFLSAGGLWASLFRARI). N-linked (GlcNAc...) asparagine glycosylation is present at N84. H181 (proton acceptor) is an active-site residue. N-linked (GlcNAc...) asparagine glycosylation is found at N413 and N467.

Belongs to the plant acyltransferase family.

It participates in mycotoxin biosynthesis. Acetyltransferase; part of the gene cluster that mediates the biosynthesis of the mycotoxin pyrichalasin H, a tyrosine-derived cytochalasan that inhibits the growth of rice seedlings, but also inhibits lymphocyte capping and actin polymerization and alters cell morphology. Pyrichalasin H is indicated as the responsible agent for the genus-specific pathogenicity of M.grisea toward crabgrass. The first step in the pathway is catalyzed by the O-methyltransferase pyiA which methylates free tyrosine to generate the precursor O-methyltyrosine. The hybrid PKS-NRPS pyiS, assisted by the enoyl reductase pyiC, are responsible for fusion of the O-methyltyrosine precursor and the polyketide backbone. The polyketide synthase module (PKS) of pyiS is responsible for the synthesis of the polyketide backbone and the downstream nonribosomal peptide synthetase (NRPS) amidates the carboxyl end of the polyketide with the O-methyltyrosine precursor. As the NRPS A-domain demonstrates substrate tolerance, pyiS can also use phenylalanine, tyrosine and even para-chlorophenylalanine as amino acid precursor, which leads to the production of novel cytochalasans, including halogenated cytochalasans. Because pyiS lacks a designated enoylreductase (ER) domain, the required activity is provided the enoyl reductase pyiC. Reduction by the hydrolyase pyiE leads to 1,5-dihydropyrrolone, which is substrate for dehydration and intra-molecular Diels-Alder cyclization by the Diels-Alderase pyiF to yield the required isoindolone-fused macrocycle. The tailoring cytochrome P450 monooxygenases piyD and piyG catalyze the hydroxylation at C-18 and C-7, respectivily, whereas the short-chain dehydrogenase/reductase pyiH reduces the carbonyl at C-21 in preparation for the transfer of an acetyl group by the acetyltransferase pyiB. These 3 reactions whose order is not clear yet, lead to the production of O-methylpyrichalasin J, a deacetylated pyrichalasin H. Finally, pyiB to converts O-methylpyrichalasin J into the final product pyrichalasin H via acetylation of C-21. This is Acetyltransferase pyiB from Pyricularia grisea (Crabgrass-specific blast fungus).